A 165-amino-acid chain; its full sequence is Growth arrest and DNA damage-inducible protein GADD45 alpha (165 aa).

Thr-2 is modified (phosphothreonine).

This sequence belongs to the GADD45 family. Interacts with AURKA, PCNA, GADD45GIP1 and MAPK14.

The protein resides in the nucleus. Its function is as follows. Might affect PCNA interaction with some CDK (cell division protein kinase) complexes; stimulates DNA excision repair in vitro and inhibits entry of cells into S phase. In T-cells, functions as a regulator of p38 MAPKs by inhibiting p88 phosphorylation and activity. The protein is Growth arrest and DNA damage-inducible protein GADD45 alpha (Gadd45a) of Rattus norvegicus (Rat).